We begin with the raw amino-acid sequence, 439 residues long: Amino-acid acetyltransferase (439 aa).

The N-acetyltransferase domain occupies 289–429 (EDIRIATVQD…DHYNYQRRSK (141 aa)).

This sequence belongs to the acetyltransferase family. ArgA subfamily.

It localises to the cytoplasm. It catalyses the reaction L-glutamate + acetyl-CoA = N-acetyl-L-glutamate + CoA + H(+). Its pathway is amino-acid biosynthesis; L-arginine biosynthesis; N(2)-acetyl-L-ornithine from L-glutamate: step 1/4. This Mannheimia succiniciproducens (strain KCTC 0769BP / MBEL55E) protein is Amino-acid acetyltransferase.